Here is a 78-residue protein sequence, read N- to C-terminus: Large ribosomal subunit protein bL28 (78 aa).

The segment at 1–25 is disordered; it reads MSRVCQVTGKRPTVGNNRSHARNAT.

This sequence belongs to the bacterial ribosomal protein bL28 family.

The chain is Large ribosomal subunit protein bL28 from Alteromonas mediterranea (strain DSM 17117 / CIP 110805 / LMG 28347 / Deep ecotype).